The following is a 170-amino-acid chain: Adenine phosphoribosyltransferase (170 aa).

This sequence belongs to the purine/pyrimidine phosphoribosyltransferase family. As to quaternary structure, homodimer.

It localises to the cytoplasm. It catalyses the reaction AMP + diphosphate = 5-phospho-alpha-D-ribose 1-diphosphate + adenine. Its pathway is purine metabolism; AMP biosynthesis via salvage pathway; AMP from adenine: step 1/1. Its function is as follows. Catalyzes a salvage reaction resulting in the formation of AMP, that is energically less costly than de novo synthesis. The sequence is that of Adenine phosphoribosyltransferase from Bacillus velezensis (strain DSM 23117 / BGSC 10A6 / LMG 26770 / FZB42) (Bacillus amyloliquefaciens subsp. plantarum).